Reading from the N-terminus, the 160-residue chain is MEEGSSSPVSPVDSLGTSEEELERQPKRFGRKRRYSKKSSEDGSPTPGKRGKKGSPSAQSFEELQSQRILANVRERQRTQSLNEAFAALRKIIPTLPSDKLSKIQTLKLAARYIDFLYQVLQSDEMDNKMTSCSYVAHERLSYAFSVWRMEGAWSMSASH.

Residues 1 to 63 (MEEGSSSPVS…GSPSAQSFEE (63 aa)) form a disordered region. Over residues 27 to 37 (KRFGRKRRYSK) the composition is skewed to basic residues. In terms of domain architecture, bHLH spans 66–117 (SQRILANVRERQRTQSLNEAFAALRKIIPTLPSDKLSKIQTLKLAARYIDFL).

Efficient DNA binding requires dimerization with another bHLH protein. Forms a heterodimer with TCF3/E12. Also interacts with MEF2C. In terms of tissue distribution, in the embryo, highly expressed in chondrogenic cells. In embryonic skin, expressed in the undifferentiated mesenchymal layer beneath the epidermis which later develops into the dermis. Expressed in early myeloid cells but not in lymphoid cells in the liver. Expression also detected in the secretory ependymal epithelium of the choroid plexus primordium. In the adult, expressed in secreting glandular tissues and tubules.

The protein localises to the nucleus. Its subcellular location is the cytoplasm. In terms of biological role, binds to the E-box consensus sequence 5'-CANNTG-3' as a heterodimer and inhibits transcriptional activation by MYOD1, MYOG, MEF2A and MEF2C. Also represses expression of pro-inflammatory cytokines such as TNFA and IL1B. Involved in postnatal glycogen storage and energy metabolism. Inhibits the premature or ectopic differentiation of preosteoblast cells during osteogenesis, possibly by changing the internal signal transduction response of osteoblasts to external growth factors. This Homo sapiens (Human) protein is Twist-related protein 2 (TWIST2).